A 205-amino-acid polypeptide reads, in one-letter code: Ribosomal RNA small subunit methyltransferase G 1 (205 aa).

S-adenosyl-L-methionine contacts are provided by residues Gly77, Leu82, 100-102 (EKS), 129-130 (LE), and Arg138.

Belongs to the methyltransferase superfamily. RNA methyltransferase RsmG family.

It localises to the cytoplasm. The catalysed reaction is guanosine(527) in 16S rRNA + S-adenosyl-L-methionine = N(7)-methylguanosine(527) in 16S rRNA + S-adenosyl-L-homocysteine. Specifically methylates the N7 position of guanine in position 527 of 16S rRNA. The protein is Ribosomal RNA small subunit methyltransferase G 1 of Bdellovibrio bacteriovorus (strain ATCC 15356 / DSM 50701 / NCIMB 9529 / HD100).